Here is a 517-residue protein sequence, read N- to C-terminus: GMP synthase [glutamine-hydrolyzing] (517 aa).

The Glutamine amidotransferase type-1 domain occupies 9-199 (RILILDFGSQ…VLNVCGCEGL (191 aa)). Cys-86 acts as the Nucleophile in catalysis. Residues His-173 and Glu-175 contribute to the active site. One can recognise a GMPS ATP-PPase domain in the interval 200 to 392 (WTSASIIEDA…LGLPYNMLYR (193 aa)). 227-233 (SGGVDSS) serves as a coordination point for ATP.

As to quaternary structure, homodimer.

The enzyme catalyses XMP + L-glutamine + ATP + H2O = GMP + L-glutamate + AMP + diphosphate + 2 H(+). The protein operates within purine metabolism; GMP biosynthesis; GMP from XMP (L-Gln route): step 1/1. Catalyzes the synthesis of GMP from XMP. This is GMP synthase [glutamine-hydrolyzing] from Aliivibrio fischeri (strain ATCC 700601 / ES114) (Vibrio fischeri).